Reading from the N-terminus, the 295-residue chain is Origin of replication complex subunit 6 (295 aa).

Residues 212–295 (PSKRKHDDDS…MALEVSSAAN (84 aa)) form a disordered region. Over residues 220–236 (DSDSSGESSGDDQDELD) the composition is skewed to acidic residues. Residues 254–263 (WKSSVLSNKQ) are compositionally biased toward polar residues.

This sequence belongs to the ORC6 family. Component of the origin recognition complex (ORC) composed of at least ORC1, ORC2, ORC3, ORC4, ORC5 and ORC6. ORC is regulated in a cell-cycle and development dependent manner. It is sequentially assembled at the exit from anaphase of mitosis and disassembled as cells enter S phase.

The protein resides in the nucleus. In terms of biological role, component of the origin recognition complex (ORC) that binds origins of replication. DNA-binding is ATP-dependent. The specific DNA sequences that define origins of replication have not been identified yet. ORC is required to assemble the pre-replication complex necessary to initiate DNA replication. The chain is Origin of replication complex subunit 6 from Oryza sativa subsp. japonica (Rice).